Reading from the N-terminus, the 314-residue chain is DDRGK domain-containing protein 1 (314 aa).

The helical transmembrane segment at 1 to 28 (MVAPVWYLVAAALLVGFILFLTRSRGRA) threads the bilayer. The mediates interaction with CDK5RAP3 stretch occupies residues 1–114 (MVAPVWYLVA…VEKPAETHLS (114 aa)). The Cytoplasmic portion of the chain corresponds to 29-314 (ASAGQEPLHN…GRESPAQAPA (286 aa)). Disordered regions lie at residues 31–75 (AGQE…SRLQ) and 100–186 (QEEE…QREH). Phosphoserine occurs at positions 72 and 114. Residues 118-216 (GAKKLRKLEE…MTEEQSQSFL (99 aa)) form a mediates interaction with TRIP4 region. Residues 124-186 (KLEEKQARKA…AREEQAQREH (63 aa)) are compositionally biased toward basic and acidic residues. The short motif at 195–209 (AFVVEEEGVGETMTE) is the UFM1-interacting motif (UFIM) element. The interval 216-314 (LTEFINYIKQ…GRESPAQAPA (99 aa)) is mediates interaction with UFL1. Residues 229–273 (VLLEDLASQVGLRTQDTINRIQDLLAEGTITGVIDDRGKFIYITP) form the PCI domain. A Glycyl lysine isopeptide (Lys-Gly) (interchain with G-Cter in UFM1) cross-link involves residue lysine 267.

It belongs to the DDRGK1 family. In terms of assembly, component of the UFM1 ribosome E3 ligase (UREL) complex, composed of UFL1, DDRGK1 and CDK5RAP3. Interacts with (unphosphorylated) ERN1/IRE1-alpha; interaction is dependent on UFM1 and takes place in response to endoplasmic reticulum stress, regulating ERN1/IRE1-alpha stability. Interacts with NFKBIA. Interacts with SOX9. In terms of processing, ubiquitinated. Ubiquitination probably triggers proteasomal degradation and is negatively regulated by UFL1, the enzyme involved in the ufmylation of DDRGK1. Ufmylated; conjugated to ubiquitin-like protein UFM1, probably at Lys-267 by UFL1. The relevance of ufmylation is however unclear: as DDRGK1 acts as a substrate adapters for ufmylation, it is uncertain whether ufmylation is a collateral effect of ufmylation process or is required to regulate its activity. Widely expressed (at protein level). In the brain, highest levels in medulla oblongata, followed by cerebral cortex, cerebellum and frontal lobe.

It localises to the endoplasmic reticulum membrane. In terms of biological role, component of the UFM1 ribosome E3 ligase (UREL) complex, a multiprotein complex that catalyzes ufmylation of endoplasmic reticulum-docked proteins. The UREL complex plays a key role in ribosome recycling by mediating mono-ufmylation of the RPL26/uL24 subunit of the 60S ribosome following ribosome dissociation: ufmylation weakens the junction between post-termination 60S subunits and SEC61 translocons, promoting release and recycling of the large ribosomal subunit from the endoplasmic reticulum membrane. Ufmylation of RPL26/uL24 and subsequent 60S ribosome recycling either take place after normal termination of translation or after ribosome stalling during cotranslational translocation at the endoplasmic reticulum. Within the UREL complex, DDRGK1 tethers the complex to the endoplasmic reticulum membrane to restrict its activity to endoplasmic reticulum-docked ribosomes and acts as an ufmylation 'reader': following RPL26/uL24 ufmylation, DDRGK1 specifically binds to ufmylated RPL26/uL24 via its UFIM motif, resulting in stable association between the 60S ribosome and the UREL complex, followed by dissociation of the 60S ribosome subunit from the endoplasmic reticulum membrane. The UREL complex is also involved in reticulophagy in response to endoplasmic reticulum stress by promoting ufmylation of proteins such as CYB5R3 and RPN1, thereby promoting lysosomal degradation of ufmylated proteins. Ufmylation-dependent reticulophagy inhibits the unfolded protein response (UPR) by regulating ERN1/IRE1-alpha stability. Acts as a regulator of immunity by promoting differentiation of B-cells into plasma cells: acts by promoting expansion of the endoplasmic reticulum and regulating the unfolded protein response (UPR). May also be required for TRIP4 ufmylation. May play a role in NF-kappa-B-mediated transcription through regulation of the phosphorylation and the degradation of NFKBIA, the inhibitor of NF-kappa-B. Plays a role in cartilage development through SOX9, inhibiting the ubiquitin-mediated proteasomal degradation of this transcriptional regulator. Required for stabilization and ufmylation of ATG9A. This chain is DDRGK domain-containing protein 1, found in Homo sapiens (Human).